The following is a 707-amino-acid chain: Lipase maturation factor 2 (707 aa).

10 consecutive transmembrane segments (helical) span residues 10–30 (AFLW…YVQI), 78–98 (MELI…FSCL), 102–122 (LVFL…QVFL), 126–146 (WDSL…LHAM), 158–178 (GVTF…SGVV), 220–240 (FSVV…FLPF), 256–276 (ILII…VLCC), 309–329 (LVSL…VKYF), 358–378 (ITFP…LKGM), and 395–415 (LQWL…LVPY). A glycan (N-linked (GlcNAc...) asparagine) is linked at Asn-483. Residues 634 to 654 (LLLHSFIFGIFTIYFLQAMFG) form a helical membrane-spanning segment. Residues 661–707 (VAKQRHSMPPNEKKKQKPNSGQGESASSKSSGHGTDTVRRNKKNEKS) form a disordered region. The span at 680 to 694 (SGQGESASSKSSGHG) shows a compositional bias: low complexity. The span at 696 to 707 (DTVRRNKKNEKS) shows a compositional bias: basic and acidic residues.

This sequence belongs to the lipase maturation factor family.

The protein localises to the endoplasmic reticulum membrane. In terms of biological role, involved in the maturation of specific proteins in the endoplasmic reticulum. In Xenopus laevis (African clawed frog), this protein is Lipase maturation factor 2 (lmf2).